A 2167-amino-acid polypeptide reads, in one-letter code: Myosin-VIIa (2167 aa).

The 671-residue stretch at 63–733 folds into the Myosin motor domain; that stretch reads QGVEDMISLG…HDLFLEQERD (671 aa). 156-163 lines the ATP pocket; it reads GESGAGKT. Actin-binding regions lie at residues 612–634 and 712–726; these read LDAL…KPNE and QLGH…AHDL. IQ domains follow at residues 736–758, 759–788, 805–827, and 828–857; these read LTRK…RFLR, LRAA…GYMR, LRGH…EYGH, and KMWA…EHKQ. Residues 886–919 are a coiled coil; sequence QHYRDRLHELERREIQEQLENRRRVEVNMNIIND. In terms of domain architecture, MyTH4 1 spans 1008–1245; it reads YAKKALKHPL…PSWLELQATK (238 aa). The 311-residue stretch at 1250-1560 folds into the FERM 1 domain; it reads IMLPITFMDG…YFLDGLKKRS (311 aa). The SH3 domain occupies 1558 to 1627; that stretch reads KRSKYVIALQ…PAETVYVLPT (70 aa). A phosphoserine mark is found at Ser1651 and Ser1654. The MyTH4 2 domain maps to 1701–1849; that stretch reads YSRDPIKAPL…PHQVEVEAIQ (149 aa). Residues 1855 to 2158 enclose the FERM 2 domain; that stretch reads IFHKVYFPDD…SYISLMLTNM (304 aa). Position 2045 is a phosphothreonine (Thr2045).

This sequence belongs to the TRAFAC class myosin-kinesin ATPase superfamily. Myosin family. Homodimerizes in a two headed molecule through the formation of a coiled-coil rod. Homodimers motility is approximately 8-10 times slower than that of myosin V, and its step size is 30 nm, which is consistent with the presence of five IQ motifs in its neck region. Interacts with Cad99C (via the cytoplasmic domain). Interacts with zip and Sans. In terms of tissue distribution, expressed in the setae, micro- and macrochaetae on the head, thorax and wing.

Its subcellular location is the cytoplasm. The protein localises to the cell cortex. The protein resides in the cell projection. It is found in the microvillus. In terms of biological role, myosins are actin-based motor molecules with ATPase activity. Unconventional myosins serve in intracellular movements: can function in cells as a single-molecule cargo transporter. A very slow and high-duty-ratio motor, may be suitable for tension maintenance of actin filaments. Their highly divergent tails are presumed to bind to membranous compartments, which would be moved relative to actin filaments. Plays a key role in the formation of cellular projections and other actin-based functions required for embryonic and larval viability. Necessary for auditory transduction: plays a role in Johnston's organ organization by functioning in scolopidial apical attachment and therefore to acoustic stimulus propagation from the antenna a2/a3 joint to transducing elements. Interaction with the myosin zip may be important for its function in scolopidial apical attachment. During oogenesis it has Cad99c-dependent and Cad99c-independent roles in regulating the shape and spacing of the follicle cell microvilli which secrete eggshell material such as the vitelline membrane. May be required for the normal expression of Cad99c in the follicle cell microvilli. This Drosophila melanogaster (Fruit fly) protein is Myosin-VIIa.